A 331-amino-acid polypeptide reads, in one-letter code: XylDLEGF operon transcriptional activator 3 (331 aa).

Positions 214 to 315 (ERVVQFIEDN…GELPSDTLRR (102 aa)) constitute an HTH araC/xylS-type domain. 2 DNA-binding regions (H-T-H motif) span residues 231–252 (ERLAELALMSPRSLYTLFEKHA) and 282–305 (VTEMALDYGFFHTGRFAENYRSTF).

The protein resides in the cytoplasm. Regulatory protein of the TOL plasmid xyl operons. XylS activates the xylXYZLTEGFJQKIH operon required for the degradation of toluene, m-xylene and p-xylene. The sequence is that of XylDLEGF operon transcriptional activator 3 (xylS3) from Pseudomonas putida (Arthrobacter siderocapsulatus).